The following is a 370-amino-acid chain: Trans-enoyl reductase xenG (370 aa).

Residues 1 to 32 (MASTGLPQLPPSQKAVIQSEKTPGAFEVSENR) form a disordered region. NADP(+)-binding positions include 54 to 57 (CDWK), 177 to 180 (STAS), 200 to 203 (SPKN), tyrosine 218, 265 to 266 (FE), and 356 to 357 (VS).

Belongs to the zinc-containing alcohol dehydrogenase family. In terms of assembly, monomer.

It functions in the pathway mycotoxin biosynthesis. In terms of biological role, trans-enoyl reductase; part of the gene cluster that mediates the biosynthesis of xenoacremones such as xenoacremone A, a compound that shows inhibitory activity toward the PI3K/AKT signaling pathway and which has the ability to induce apoptosis of A549 lung cancer cells. Within the pathway, cooperation of the hybrid PKS-NRPS xenE and the trans-acting enoyl reductase xenG is responsible for the formation of the reduced tyrosine-nonaketide derivative. The alpha/beta hydrolase xenA then accelerates intramolecular nucleophilic attack to give a pyrrolidone derivative. Subsequently, three enzymes, xenF, xenD, and xenC, coordinately participate in the conversion to xenoacremone B. XenF catalyzes sigmatropic rearrangement to form an A-ring, which leads to an unusual intermediate with a hexane ring, which is required for the formation of the tricarbocyclic product. Epoxidation catalyzed by xenD and the formation of the paracyclophane ether catalyzed by xenC initiate a spontaneous intramolecular Diels-Alder (IMDA) reaction to yield xenoacremone B. Spontaneous hydration of xenoacremone B leads to the formation of xenoacremone A, which undergoes subsequent methylation to afford xenoacremone C. The chain is Trans-enoyl reductase xenG from Xenoacremonium sinensis (Endophyte fungus).